Here is a 632-residue protein sequence, read N- to C-terminus: DNA mismatch repair protein MutL (632 aa).

This sequence belongs to the DNA mismatch repair MutL/HexB family.

In terms of biological role, this protein is involved in the repair of mismatches in DNA. It is required for dam-dependent methyl-directed DNA mismatch repair. May act as a 'molecular matchmaker', a protein that promotes the formation of a stable complex between two or more DNA-binding proteins in an ATP-dependent manner without itself being part of a final effector complex. In Pseudomonas putida (strain GB-1), this protein is DNA mismatch repair protein MutL.